Here is a 91-residue protein sequence, read N- to C-terminus: Putative regulatory protein Moth_0891 (91 aa).

This sequence belongs to the RemA family.

The polypeptide is Putative regulatory protein Moth_0891 (Moorella thermoacetica (strain ATCC 39073 / JCM 9320)).